A 270-amino-acid chain; its full sequence is Probable feruloyl esterase C (270 aa).

The first 21 residues, 1 to 21, serve as a signal peptide directing secretion; sequence MIKSIILQAIMVLSTLTSVHG. N-linked (GlcNAc...) asparagine glycosylation occurs at Asn-23.

This sequence belongs to the faeC family.

Its subcellular location is the secreted. It carries out the reaction feruloyl-polysaccharide + H2O = ferulate + polysaccharide.. Its function is as follows. Involved in degradation of plant cell walls. Hydrolyzes the feruloyl-arabinose ester bond in arabinoxylans, and the feruloyl-galactose ester bond in pectin. Active against paranitrophenyl-acetate, methyl ferulate and wheat arabinoxylan. This chain is Probable feruloyl esterase C (faeC), found in Aspergillus flavus (strain ATCC 200026 / FGSC A1120 / IAM 13836 / NRRL 3357 / JCM 12722 / SRRC 167).